Here is a 665-residue protein sequence, read N- to C-terminus: DNA ligase (665 aa).

Residues 31-35, 80-81, and Glu-110 contribute to the NAD(+) site; these read DKEFD and SL. Lys-112 acts as the N6-AMP-lysine intermediate in catalysis. Arg-133, Glu-170, Lys-285, and Lys-309 together coordinate NAD(+). Residues Cys-403, Cys-406, Cys-421, and Cys-427 each contribute to the Zn(2+) site. Positions 587 to 665 constitute a BRCT domain; sequence GHTDKLAGQS…NEEEFLKLIS (79 aa).

Belongs to the NAD-dependent DNA ligase family. LigA subfamily. Requires Mg(2+) as cofactor. The cofactor is Mn(2+).

It catalyses the reaction NAD(+) + (deoxyribonucleotide)n-3'-hydroxyl + 5'-phospho-(deoxyribonucleotide)m = (deoxyribonucleotide)n+m + AMP + beta-nicotinamide D-nucleotide.. Functionally, DNA ligase that catalyzes the formation of phosphodiester linkages between 5'-phosphoryl and 3'-hydroxyl groups in double-stranded DNA using NAD as a coenzyme and as the energy source for the reaction. It is essential for DNA replication and repair of damaged DNA. This is DNA ligase from Bacteroides fragilis (strain ATCC 25285 / DSM 2151 / CCUG 4856 / JCM 11019 / LMG 10263 / NCTC 9343 / Onslow / VPI 2553 / EN-2).